A 176-amino-acid chain; its full sequence is NAD(P)H-quinone oxidoreductase subunit I, chloroplastic (176 aa).

2 consecutive 4Fe-4S ferredoxin-type domains span residues 55-84 (GRIHFEFDKCIACEVCVRVCPIDLPVVDWE) and 95-124 (LNYSIDFGICIFCGNCVEYCPTNCLSMTEE). The [4Fe-4S] cluster site is built by Cys-64, Cys-67, Cys-70, Cys-74, Cys-104, Cys-107, Cys-110, and Cys-114.

The protein belongs to the complex I 23 kDa subunit family. NDH is composed of at least 16 different subunits, 5 of which are encoded in the nucleus. Requires [4Fe-4S] cluster as cofactor.

It is found in the plastid. It localises to the chloroplast thylakoid membrane. It carries out the reaction a plastoquinone + NADH + (n+1) H(+)(in) = a plastoquinol + NAD(+) + n H(+)(out). The enzyme catalyses a plastoquinone + NADPH + (n+1) H(+)(in) = a plastoquinol + NADP(+) + n H(+)(out). NDH shuttles electrons from NAD(P)H:plastoquinone, via FMN and iron-sulfur (Fe-S) centers, to quinones in the photosynthetic chain and possibly in a chloroplast respiratory chain. The immediate electron acceptor for the enzyme in this species is believed to be plastoquinone. Couples the redox reaction to proton translocation, and thus conserves the redox energy in a proton gradient. In Populus trichocarpa (Western balsam poplar), this protein is NAD(P)H-quinone oxidoreductase subunit I, chloroplastic.